The sequence spans 469 residues: Probable monogalactosyldiacylglycerol synthase 2, chloroplastic (469 aa).

Residues 1–42 constitute a chloroplast transit peptide; the sequence is MVISVATPRRSIRDAVLGGVLGAGGRQLYQPLRCAFYDGAAG.

The protein belongs to the glycosyltransferase 28 family.

The protein resides in the plastid. It localises to the chloroplast membrane. It carries out the reaction a 1,2-diacyl-sn-glycerol + UDP-alpha-D-galactose = a 1,2-diacyl-3-O-(beta-D-galactosyl)-sn-glycerol + UDP + H(+). Its function is as follows. Involved in the synthesis of the major structural component of photosynthetic membranes. This chain is Probable monogalactosyldiacylglycerol synthase 2, chloroplastic (MGD2), found in Oryza sativa subsp. indica (Rice).